Consider the following 25-residue polypeptide: Xenoposin precursor fragment BM3 (25 aa).

In terms of tissue distribution, expressed by the skin glands.

The protein localises to the secreted. Antimicrobial peptide. The polypeptide is Xenoposin precursor fragment BM3 (Xenopus boumbaensis (Mawa clawed frog)).